A 229-amino-acid polypeptide reads, in one-letter code: Ribonuclease 3 (229 aa).

Positions 5-127 constitute an RNase III domain; it reads LDRLERKLGY…LIGAIYQDAD (123 aa). Glutamate 40 lines the Mg(2+) pocket. Residue aspartate 44 is part of the active site. The Mg(2+) site is built by aspartate 113 and glutamate 116. Glutamate 116 is a catalytic residue. A DRBM domain is found at 154-224; the sequence is DPKTRLQEFL…AAAALIALGV (71 aa).

This sequence belongs to the ribonuclease III family. As to quaternary structure, homodimer. Requires Mg(2+) as cofactor.

Its subcellular location is the cytoplasm. It carries out the reaction Endonucleolytic cleavage to 5'-phosphomonoester.. Functionally, digests double-stranded RNA. Involved in the processing of primary rRNA transcript to yield the immediate precursors to the large and small rRNAs (23S and 16S). Processes some mRNAs, and tRNAs when they are encoded in the rRNA operon. Processes pre-crRNA and tracrRNA of type II CRISPR loci if present in the organism. This Pseudomonas entomophila (strain L48) protein is Ribonuclease 3.